The chain runs to 368 residues: Aminomethyltransferase (368 aa).

The protein belongs to the GcvT family. As to quaternary structure, the glycine cleavage system is composed of four proteins: P, T, L and H.

It carries out the reaction N(6)-[(R)-S(8)-aminomethyldihydrolipoyl]-L-lysyl-[protein] + (6S)-5,6,7,8-tetrahydrofolate = N(6)-[(R)-dihydrolipoyl]-L-lysyl-[protein] + (6R)-5,10-methylene-5,6,7,8-tetrahydrofolate + NH4(+). Functionally, the glycine cleavage system catalyzes the degradation of glycine. This chain is Aminomethyltransferase, found in Thermoanaerobacter pseudethanolicus (strain ATCC 33223 / 39E) (Clostridium thermohydrosulfuricum).